A 120-amino-acid chain; its full sequence is Large ribosomal subunit protein uL22 (120 aa).

The protein belongs to the universal ribosomal protein uL22 family. As to quaternary structure, part of the 50S ribosomal subunit.

In terms of biological role, this protein binds specifically to 23S rRNA; its binding is stimulated by other ribosomal proteins, e.g. L4, L17, and L20. It is important during the early stages of 50S assembly. It makes multiple contacts with different domains of the 23S rRNA in the assembled 50S subunit and ribosome. Functionally, the globular domain of the protein is located near the polypeptide exit tunnel on the outside of the subunit, while an extended beta-hairpin is found that lines the wall of the exit tunnel in the center of the 70S ribosome. The protein is Large ribosomal subunit protein uL22 of Acaryochloris marina (strain MBIC 11017).